The chain runs to 441 residues: MQFDTRVLRQWNVPKLRALQRYALRRAGEDSLPQVAGSLTFTTVLSLVPILTVAFALFTAFPMFQSFRAAIEGYLFSNLVPGNISRPILTYLNQFSHNAKGLTAAGLVGLVVTSVMTMLTVENALNAIWRVRQRRPLAQRVLVFWALVSFGPVLIGASLSVSSYLVSVSAGYVAKLPYGLGVVVGLVPILLSAIAFAMLYVFVPNTLVAWRDAFLAGLVAAVAFEIAKRGFGYYVARFPTYTAVYGTFAALPIFLLWIYVSWLVTLLGATIAATLPIIRQGYWQRRAFPGSEFFDALGILLLLHRARDHAPRTLGELDIGRRLQLEADYVADLLIQLKTLHLVGKLQQDRGQAHWALLCDAHTTTLRPLYEKLVLSLPRLSRTAFAHQLGDTRVLEAQLHNPALDCTLEAVFASGEPGVVKAAAEAAAAPAAATLAASARA.

Transmembrane regions (helical) follow at residues 44 to 64 (VLSL…FPMF), 101 to 121 (GLTA…MLTV), 141 to 161 (VLVF…SLSV), 182 to 202 (VVVG…LYVF), 207 to 227 (LVAW…FEIA), and 248 to 268 (FAAL…TLLG).

It belongs to the UPF0761 family.

It localises to the cell inner membrane. In Ralstonia nicotianae (strain ATCC BAA-1114 / GMI1000) (Ralstonia solanacearum), this protein is UPF0761 membrane protein RSc1559.